A 764-amino-acid chain; its full sequence is Mitogen-activated protein kinase kinase kinase 1b (764 aa).

Disordered stretches follow at residues 1 to 81 (MVEE…IQQQ), 120 to 260 (KSIA…TATR), 325 to 348 (PNLAEEAESSAKPESSAIPDSSAM), and 360 to 392 (VPELSAKPESNAKPESEPEQDSSVEARTEHYGS). The segment covering 14 to 30 (GSWGSGEDGGSSHGGKG) has biased composition (gly residues). Low complexity-rich tracts occupy residues 60–76 (VHSTSSSGSRRNPLSKS) and 125–135 (SQPLSSPSLSQ). Over residues 136 to 145 (EHGEASHSND) the composition is skewed to basic and acidic residues. The span at 184 to 201 (YVNSQPQNHYGRKNSPSQ) shows a compositional bias: polar residues. Residues 431 to 684 (WFKGDFIGSG…CDMLLTHPFI (254 aa)) enclose the Protein kinase domain. ATP contacts are provided by residues 437-445 (IGSGTFGSV) and Lys-459. Catalysis depends on Asp-554, which acts as the Proton acceptor. Positions 706-764 (EERSIDVSESPSIATSSQSGSSPSVAGDAVSPASVAVRPRSMRTLRSEFSMSSPESIAS) are disordered. Residues 715-729 (SPSIATSSQSGSSPS) are compositionally biased toward low complexity. Polar residues predominate over residues 752 to 764 (SEFSMSSPESIAS).

This sequence belongs to the protein kinase superfamily. STE Ser/Thr protein kinase family. MAP kinase kinase kinase subfamily.

The protein localises to the cell membrane. The enzyme catalyses L-seryl-[protein] + ATP = O-phospho-L-seryl-[protein] + ADP + H(+). It catalyses the reaction L-threonyl-[protein] + ATP = O-phospho-L-threonyl-[protein] + ADP + H(+). The CERK1, MEKK1a/b, MKK1a/b/c and MPK4a/b proteins are involved in pathogen defense. The pathway induces rapid growth inhibition, cell wall depositions and accumulation of defense-related transcripts. This protein is required for responses to chitin and acts redundantly with MEKK1a. The protein is Mitogen-activated protein kinase kinase kinase 1b (MEKK1b) of Physcomitrium patens (Spreading-leaved earth moss).